A 451-amino-acid chain; its full sequence is Enolase (451 aa).

Q163 is a binding site for (2R)-2-phosphoglycerate. The active-site Proton donor is the E205. Mg(2+) contacts are provided by D258, E308, and D335. (2R)-2-phosphoglycerate contacts are provided by K360, R389, S390, and K411. Catalysis depends on K360, which acts as the Proton acceptor.

Belongs to the enolase family. Requires Mg(2+) as cofactor.

It localises to the cytoplasm. The protein resides in the secreted. The protein localises to the cell surface. It catalyses the reaction (2R)-2-phosphoglycerate = phosphoenolpyruvate + H2O. Its pathway is carbohydrate degradation; glycolysis; pyruvate from D-glyceraldehyde 3-phosphate: step 4/5. Catalyzes the reversible conversion of 2-phosphoglycerate (2-PG) into phosphoenolpyruvate (PEP). It is essential for the degradation of carbohydrates via glycolysis. The polypeptide is Enolase (Mycoplasma mycoides subsp. mycoides SC (strain CCUG 32753 / NCTC 10114 / PG1)).